The sequence spans 383 residues: Podocin (383 aa).

Basic and acidic residues predominate over residues 1 to 41 (MERRARSSSRESRGRGGRTPHKENKRAKAERSGGGRGRQEA). The tract at residues 1–76 (MERRARSSSR…VDEVRGSGEE (76 aa)) is disordered. Residues 1–102 (MERRARSSSR…TKSSGLGACE (102 aa)) lie on the Cytoplasmic side of the membrane. C101 carries the S-palmitoyl cysteine lipid modification. An intramembrane segment occupies 103–123 (WLLVLISLLFIIMTFPFSIWF). Over 124 to 383 (CVKVVQEYER…NPKKKDSPML (260 aa)) the chain is Cytoplasmic. N-linked (GlcNAc...) asparagine glycosylation is present at Q287. Residues 355–383 (NRTQGSLPFPSPSKPVEPLNPKKKDSPML) form a disordered region. Residues 374–383 (NPKKKDSPML) show a composition bias toward basic and acidic residues.

It belongs to the band 7/mec-2 family. Interacts with nephrin/NPHS1 and KIRREL1. Interacts directly with CD2AP. Interacts with DDN. Post-translationally, glycosylated. As to expression, almost exclusively expressed in the podocytes of fetal and mature kidney glomeruli.

Its subcellular location is the cell membrane. The protein resides in the endoplasmic reticulum. Its function is as follows. Plays a role in the regulation of glomerular permeability, acting probably as a linker between the plasma membrane and the cytoskeleton. This is Podocin (NPHS2) from Homo sapiens (Human).